The sequence spans 692 residues: 5-taurinomethyluridine-[tRNA] synthase subunit MTO1, mitochondrial (692 aa).

Residues methionine 1–leucine 25 constitute a mitochondrion transit peptide. FAD is bound by residues glycine 43–glycine 48, valine 155, serine 218, and glutamine 407. At lysine 508 the chain carries N6-methyllysine.

This sequence belongs to the MnmG family. In terms of assembly, homodimer; forms a dimer in the presence of potassium. Interacts with GTPBP3; forms the GTPBP3-MTO1 complex composed of homodimers of GTPBP3 and MTO1. FAD serves as cofactor.

It localises to the mitochondrion. The catalysed reaction is 5,10-methylenetetrahydrofolate + uridine(34) in tRNA + taurine + GTP + A + H2O = 5-taurinomethyluridine(34) in tRNA + 7,8-dihydrofolate + GDP + AH2 + phosphate + H(+). Its function is as follows. Component of the GTPBP3-MTO1 complex that catalyzes the 5-taurinomethyluridine (taum(5)U) modification at the 34th wobble position (U34) of mitochondrial tRNAs (mt-tRNAs), which plays a role in mt-tRNA decoding and mitochondrial translation. Taum(5)U formation on mammalian mt-tRNA requires the presence of both GTPBP3-mediated GTPase activity and MTO1 catalytic activity. This Pongo abelii (Sumatran orangutan) protein is 5-taurinomethyluridine-[tRNA] synthase subunit MTO1, mitochondrial (MTO1).